The sequence spans 142 residues: DNA-directed RNA polymerase II subunit RPB4 (142 aa).

It belongs to the eukaryotic RPB4 RNA polymerase subunit family. In terms of assembly, component of the RNA polymerase II (Pol II) core complex consisting of 12 subunits: a ten-subunit catalytic core composed of POLR2A/RPB1, POLR2B/RPB2, POLR2C/RPB3, POLR2I/RPB9, POLR2J/RPB11, POLR2E/RPABC1, POLR2F/RPABC2, POLR2H/RPABC3, POLR2K/RPABC4 and POLR2L/RPABC5 and a mobile stalk composed of two subunits POLR2D/RPB4 and POLR2G/RPB7, protruding from the core and functioning primarily in transcription initiation. Part of Pol II(G) complex, in which Pol II core associates with an additional subunit POLR2M; unlike conventional Pol II, Pol II(G) functions as a transcriptional repressor. Part of Pol II pre-initiation complex (PIC), in which Pol II core assembles with Mediator, general transcription factors and other specific initiation factors including GTF2E1, GTF2E2, GTF2F1, GTF2F2, TCEA1, ERCC2, ERCC3, GTF2H2, GTF2H3, GTF2H4, GTF2H5, GTF2A1, GTF2A2, GTF2B and TBP; this large multi-subunit PIC complex mediates DNA unwinding and targets Pol II core to the transcription start site where the first phosphodiester bond forms.

It localises to the nucleus. Its function is as follows. Core component of RNA polymerase II (Pol II), a DNA-dependent RNA polymerase which synthesizes mRNA precursors and many functional non-coding RNAs using the four ribonucleoside triphosphates as substrates. Pol II is the central component of the basal RNA polymerase II transcription machinery. It is composed of mobile elements that move relative to each other. POLR2D/RPB4 is part of a subcomplex with POLR2G/RPB7 that binds to a pocket formed by POLR2A/RPB1, POLR2B/RPB2 and POLR2F/RPABC2 at the base of the clamp element. The POLR2D/RPB4-POLR2G/RPB7 subcomplex seems to lock the clamp via POLR2G/RPB7 in the closed conformation thus preventing double-stranded DNA to enter the active site cleft. The POLR2D/RPB4-POLR2G/RPB7 subcomplex binds single-stranded DNA and RNA. The sequence is that of DNA-directed RNA polymerase II subunit RPB4 (POLR2D) from Bos taurus (Bovine).